The following is a 266-amino-acid chain: Putative expansin-A30 (266 aa).

The first 24 residues, 1 to 24 (MAAASSTTATTAILAAVIISLAGA), serve as a signal peptide directing secretion. One can recognise an Expansin-like EG45 domain in the interval 55–170 (GGACGYGNLY…RRVPCARAGG (116 aa)). One can recognise an Expansin-like CBD domain in the interval 180–261 (YWLLAYVMNV…SWCFGLTYQA (82 aa)).

The protein belongs to the expansin family. Expansin A subfamily.

The protein resides in the secreted. It localises to the cell wall. The protein localises to the membrane. May cause loosening and extension of plant cell walls by disrupting non-covalent bonding between cellulose microfibrils and matrix glucans. No enzymatic activity has been found. May be required for rapid internodal elongation in deepwater rice during submergence. This chain is Putative expansin-A30 (EXPA30), found in Oryza sativa subsp. japonica (Rice).